We begin with the raw amino-acid sequence, 331 residues long: HPr kinase/phosphorylase (331 aa).

Active-site residues include His153 and Lys174. 168-175 (GKSGLGKS) provides a ligand contact to ATP. Mg(2+) is bound at residue Ser175. Residue Asp192 is the Proton acceptor; for phosphorylation activity. Proton donor; for dephosphorylation activity of the active site. Positions 217–226 (MEIRGLGVVD) are important for the catalytic mechanism of both phosphorylation and dephosphorylation. Glu218 is a binding site for Mg(2+). Arg259 is an active-site residue. The tract at residues 280-285 (PIFPGK) is important for the catalytic mechanism of dephosphorylation.

This sequence belongs to the HPrK/P family. As to quaternary structure, homohexamer. The cofactor is Mg(2+).

The catalysed reaction is [HPr protein]-L-serine + ATP = [HPr protein]-O-phospho-L-serine + ADP + H(+). It catalyses the reaction [HPr protein]-O-phospho-L-serine + phosphate + H(+) = [HPr protein]-L-serine + diphosphate. Functionally, catalyzes the ATP- as well as the pyrophosphate-dependent phosphorylation of a specific serine residue in HPr, a phosphocarrier protein of the phosphoenolpyruvate-dependent sugar phosphotransferase system (PTS). HprK/P also catalyzes the pyrophosphate-producing, inorganic phosphate-dependent dephosphorylation (phosphorolysis) of seryl-phosphorylated HPr (P-Ser-HPr). This is HPr kinase/phosphorylase from Pelodictyon phaeoclathratiforme (strain DSM 5477 / BU-1).